Reading from the N-terminus, the 364-residue chain is MSSAQRKDDHVRLATEQQRAHSGRNQFDDVSFVHHALAGIDRPDVRLATTFAGITWRLPLYINAMTGGSAKTGAINRDLAVAARETGAAIASGSMHAFFRDPSCADTFRVLRTENPDGFVMANVNATASVDNARRAVDLIEANALQIHLNTAQETPMPEGDRSFGSWPAQIAKITAAVDVPVIVKEVGNGLSRQTLLALPDLGVRVADVSGRGGTDFARIENSRRPLGDYAFLHGWGQSTPACLLDAQDVGFPLLASGGIRNPLDVARALALGAGAVGSSGVFLRTLIDGGVSALVAQISTWLDQLAALQTMLGARTPADLTRCDVLIHGPLRSFCTDRGIDIGRFARRSSSADIRSEMTGSTR.

The segment covering 1 to 13 has biased composition (basic and acidic residues); the sequence is MSSAQRKDDHVRL. Residues 1 to 24 form a disordered region; sequence MSSAQRKDDHVRLATEQQRAHSGR. Residue 6–7 participates in substrate binding; it reads RK. FMN is bound by residues 64 to 66, Ser94, and Asn123; that span reads AMT. A substrate-binding site is contributed by 94 to 96; that stretch reads SMH. Position 153 (Gln153) interacts with substrate. Residue Glu154 coordinates Mg(2+). FMN contacts are provided by residues Lys185, Ser210, Thr215, 259–261, and 280–281; these read GIR and SG.

Belongs to the IPP isomerase type 2 family. As to quaternary structure, homooctamer. Dimer of tetramers. FMN is required as a cofactor. NADPH serves as cofactor. The cofactor is Mg(2+).

The protein resides in the cytoplasm. The enzyme catalyses isopentenyl diphosphate = dimethylallyl diphosphate. Functionally, involved in the biosynthesis of isoprenoids. Catalyzes the 1,3-allylic rearrangement of the homoallylic substrate isopentenyl (IPP) to its allylic isomer, dimethylallyl diphosphate (DMAPP). The polypeptide is Isopentenyl-diphosphate delta-isomerase (Kitasatospora griseola (Streptomyces griseolosporeus)).